The following is a 505-amino-acid chain: ATP synthase subunit alpha (505 aa).

171 to 178 (GDRQTGKT) serves as a coordination point for ATP.

The protein belongs to the ATPase alpha/beta chains family. F-type ATPases have 2 components, CF(1) - the catalytic core - and CF(0) - the membrane proton channel. CF(1) has five subunits: alpha(3), beta(3), gamma(1), delta(1), epsilon(1). CF(0) has three main subunits: a(1), b(2) and c(9-12). The alpha and beta chains form an alternating ring which encloses part of the gamma chain. CF(1) is attached to CF(0) by a central stalk formed by the gamma and epsilon chains, while a peripheral stalk is formed by the delta and b chains.

It is found in the cell inner membrane. The catalysed reaction is ATP + H2O + 4 H(+)(in) = ADP + phosphate + 5 H(+)(out). Produces ATP from ADP in the presence of a proton gradient across the membrane. The alpha chain is a regulatory subunit. The protein is ATP synthase subunit alpha of Campylobacter curvus (strain 525.92).